A 256-amino-acid chain; its full sequence is 5-keto-4-deoxy-D-glucarate aldolase (256 aa).

His-50 functions as the Proton acceptor in the catalytic mechanism. Residue Gln-151 participates in substrate binding. Glu-153 contributes to the Mg(2+) binding site. The substrate site is built by Ser-178 and Asp-179. A Mg(2+)-binding site is contributed by Asp-179.

The protein belongs to the HpcH/HpaI aldolase family. KDGluc aldolase subfamily. Homohexamer; trimer of dimers. Mg(2+) is required as a cofactor.

It carries out the reaction 5-dehydro-4-deoxy-D-glucarate = 2-hydroxy-3-oxopropanoate + pyruvate. It catalyses the reaction 2-dehydro-3-deoxy-D-glucarate = 2-hydroxy-3-oxopropanoate + pyruvate. It participates in carbohydrate acid metabolism; galactarate degradation; D-glycerate from galactarate: step 2/3. Its function is as follows. Catalyzes the reversible retro-aldol cleavage of both 5-keto-4-deoxy-D-glucarate and 2-keto-3-deoxy-D-glucarate to pyruvate and tartronic semialdehyde. The chain is 5-keto-4-deoxy-D-glucarate aldolase from Escherichia fergusonii (strain ATCC 35469 / DSM 13698 / CCUG 18766 / IAM 14443 / JCM 21226 / LMG 7866 / NBRC 102419 / NCTC 12128 / CDC 0568-73).